The chain runs to 399 residues: Putative 8-amino-7-oxononanoate synthase (399 aa).

Position 23 (Arg23) interacts with substrate. 110 to 111 (GY) serves as a coordination point for pyridoxal 5'-phosphate. His135 is a substrate binding site. Residues Ser183, 208 to 211 (DEAH), and 239 to 242 (TLSK) each bind pyridoxal 5'-phosphate. At Lys242 the chain carries N6-(pyridoxal phosphate)lysine. Thr364 is a substrate binding site.

This sequence belongs to the class-II pyridoxal-phosphate-dependent aminotransferase family. BioF subfamily. Homodimer. Requires pyridoxal 5'-phosphate as cofactor.

The enzyme catalyses 6-carboxyhexanoyl-[ACP] + L-alanine + H(+) = (8S)-8-amino-7-oxononanoate + holo-[ACP] + CO2. The protein operates within cofactor biosynthesis; biotin biosynthesis. Catalyzes the decarboxylative condensation of pimeloyl-[acyl-carrier protein] and L-alanine to produce 8-amino-7-oxononanoate (AON), [acyl-carrier protein], and carbon dioxide. The chain is Putative 8-amino-7-oxononanoate synthase (bioF) from Cyanothece sp. (strain PCC 7425 / ATCC 29141).